The primary structure comprises 197 residues: Holliday junction branch migration complex subunit RuvA (197 aa).

Residues 1-63 (MINKIHGKVI…ENELKLFGFL (63 aa)) are domain I. Residues 64 to 139 (NSDEREIFKE…KLLINSELES (76 aa)) are domain II. Residue serine 139 is a region of interest, flexible linker. The segment at 140-197 (TGLFRFKELEESIVSMGFDRKIVNSKIREAFNLAEFANLKDSEKEQFLFKEVLKRISN) is domain III.

It belongs to the RuvA family. In terms of assembly, homotetramer. Forms an RuvA(8)-RuvB(12)-Holliday junction (HJ) complex. HJ DNA is sandwiched between 2 RuvA tetramers; dsDNA enters through RuvA and exits via RuvB. An RuvB hexamer assembles on each DNA strand where it exits the tetramer. Each RuvB hexamer is contacted by two RuvA subunits (via domain III) on 2 adjacent RuvB subunits; this complex drives branch migration. In the full resolvosome a probable DNA-RuvA(4)-RuvB(12)-RuvC(2) complex forms which resolves the HJ.

The protein localises to the cytoplasm. Functionally, the RuvA-RuvB-RuvC complex processes Holliday junction (HJ) DNA during genetic recombination and DNA repair, while the RuvA-RuvB complex plays an important role in the rescue of blocked DNA replication forks via replication fork reversal (RFR). RuvA specifically binds to HJ cruciform DNA, conferring on it an open structure. The RuvB hexamer acts as an ATP-dependent pump, pulling dsDNA into and through the RuvAB complex. HJ branch migration allows RuvC to scan DNA until it finds its consensus sequence, where it cleaves and resolves the cruciform DNA. This chain is Holliday junction branch migration complex subunit RuvA, found in Borreliella burgdorferi (strain ATCC 35210 / DSM 4680 / CIP 102532 / B31) (Borrelia burgdorferi).